A 531-amino-acid polypeptide reads, in one-letter code: MNEKQRLEQTGQIKTESHPADRKSALDRLKEKTTKDYEKYFTSVFLPPNLKEAKKRGKEEVKYVKDFSIPEEFRGMGRGRKFYIRTYGCQMNEHDTEVMAGIFMALGYEPTDRPEEANVILLNTCAIRENAENKVFGELGYLKPLKTTNPDLLLGVCGCMSQEESVVKKILKQYQYVDLIFGTHNIHRLPYILHEAYMSKEMVVEVWSKEGDVVENLPKVRKGKIKAWVNIMYGCDKFCTYCIVPYTRGKERSRRPEDIIQEVRQLAAQGYKEITLLGQNVNAYGKDFTDIQYGLGDLMDELRKIDIARIRFTTSHPRDFDDRLIEVLAKRGNLVEHIHLPVQSGSTEILKMMGRKYTREEYLELVRKIKAAIPDVALTTDIIVGFPNETDEQFEETLSLYREVEFDSAYTFIYSPREGTPAANMKDNVPMEVKKERLKRLNDLVQEIAAKKMKQYEGQVVEVLVEGESKTNPDVLAGYTRKNKLVHFVGPKSLIGQLVNVRITQAKTWTLTGELVNEAIEVNEHGKIYAG.

A disordered region spans residues 1–26; the sequence is MNEKQRLEQTGQIKTESHPADRKSAL. A compositionally biased stretch (basic and acidic residues) spans 15 to 26; that stretch reads TESHPADRKSAL. Residues 80–198 enclose the MTTase N-terminal domain; the sequence is RKFYIRTYGC…LPYILHEAYM (119 aa). [4Fe-4S] cluster contacts are provided by cysteine 89, cysteine 125, cysteine 159, cysteine 235, cysteine 239, and cysteine 242. The 231-residue stretch at 221 to 451 folds into the Radical SAM core domain; the sequence is RKGKIKAWVN…NDLVQEIAAK (231 aa). The 64-residue stretch at 454 to 517 folds into the TRAM domain; that stretch reads KQYEGQVVEV…TWTLTGELVN (64 aa).

It belongs to the methylthiotransferase family. MiaB subfamily. Monomer. [4Fe-4S] cluster is required as a cofactor.

It localises to the cytoplasm. The catalysed reaction is N(6)-dimethylallyladenosine(37) in tRNA + (sulfur carrier)-SH + AH2 + 2 S-adenosyl-L-methionine = 2-methylsulfanyl-N(6)-dimethylallyladenosine(37) in tRNA + (sulfur carrier)-H + 5'-deoxyadenosine + L-methionine + A + S-adenosyl-L-homocysteine + 2 H(+). Functionally, catalyzes the methylthiolation of N6-(dimethylallyl)adenosine (i(6)A), leading to the formation of 2-methylthio-N6-(dimethylallyl)adenosine (ms(2)i(6)A) at position 37 in tRNAs that read codons beginning with uridine. The protein is tRNA-2-methylthio-N(6)-dimethylallyladenosine synthase of Geobacillus kaustophilus (strain HTA426).